Here is a 308-residue protein sequence, read N- to C-terminus: Aspartate carbamoyltransferase catalytic subunit (308 aa).

The carbamoyl phosphate site is built by R55 and T56. Residue K83 coordinates L-aspartate. Residues R105, H133, and Q136 each contribute to the carbamoyl phosphate site. 2 residues coordinate L-aspartate: R166 and R220. Residues G261 and P262 each coordinate carbamoyl phosphate.

This sequence belongs to the aspartate/ornithine carbamoyltransferase superfamily. ATCase family. Heterododecamer (2C3:3R2) of six catalytic PyrB chains organized as two trimers (C3), and six regulatory PyrI chains organized as three dimers (R2).

It carries out the reaction carbamoyl phosphate + L-aspartate = N-carbamoyl-L-aspartate + phosphate + H(+). It functions in the pathway pyrimidine metabolism; UMP biosynthesis via de novo pathway; (S)-dihydroorotate from bicarbonate: step 2/3. In terms of biological role, catalyzes the condensation of carbamoyl phosphate and aspartate to form carbamoyl aspartate and inorganic phosphate, the committed step in the de novo pyrimidine nucleotide biosynthesis pathway. The sequence is that of Aspartate carbamoyltransferase catalytic subunit from Chlorobaculum tepidum (strain ATCC 49652 / DSM 12025 / NBRC 103806 / TLS) (Chlorobium tepidum).